The chain runs to 183 residues: Protein Syd (183 aa).

It belongs to the Syd family.

It is found in the cell inner membrane. Interacts with the SecY protein in vivo. May bind preferentially to an uncomplexed state of SecY, thus functioning either as a chelating agent for excess SecY in the cell or as a regulatory factor that negatively controls the translocase function. This Aliivibrio fischeri (strain ATCC 700601 / ES114) (Vibrio fischeri) protein is Protein Syd.